The primary structure comprises 274 residues: NADPH-dependent 7-cyano-7-deazaguanine reductase (274 aa).

80–82 (VES) lines the substrate pocket. 82–83 (SK) provides a ligand contact to NADPH. The active-site Thioimide intermediate is the C181. D188 functions as the Proton donor in the catalytic mechanism. Residue 220-221 (HE) participates in substrate binding. Residue 249–250 (RG) coordinates NADPH.

The protein belongs to the GTP cyclohydrolase I family. QueF type 2 subfamily. In terms of assembly, homodimer.

The protein localises to the cytoplasm. The catalysed reaction is 7-aminomethyl-7-carbaguanine + 2 NADP(+) = 7-cyano-7-deazaguanine + 2 NADPH + 3 H(+). It functions in the pathway tRNA modification; tRNA-queuosine biosynthesis. Its function is as follows. Catalyzes the NADPH-dependent reduction of 7-cyano-7-deazaguanine (preQ0) to 7-aminomethyl-7-deazaguanine (preQ1). This Burkholderia vietnamiensis (strain G4 / LMG 22486) (Burkholderia cepacia (strain R1808)) protein is NADPH-dependent 7-cyano-7-deazaguanine reductase.